The primary structure comprises 444 residues: Tol-Pal system protein TolB (444 aa).

An N-terminal signal peptide occupies residues 1–19 (MRNIIYFILSLLFSVTSYA).

It belongs to the TolB family. In terms of assembly, the Tol-Pal system is composed of five core proteins: the inner membrane proteins TolA, TolQ and TolR, the periplasmic protein TolB and the outer membrane protein Pal. They form a network linking the inner and outer membranes and the peptidoglycan layer.

The protein localises to the periplasm. Functionally, part of the Tol-Pal system, which plays a role in outer membrane invagination during cell division and is important for maintaining outer membrane integrity. The sequence is that of Tol-Pal system protein TolB from Rickettsia conorii (strain ATCC VR-613 / Malish 7).